Reading from the N-terminus, the 128-residue chain is MKLLQIRLLVNDFKKSVEFYKDSLGLPISWLENEMEYALFDNGETKIELLSRETMAEIVGEEKKSLEGEAQSKFLLQFKVEDVDKTYDDLHEKGVKCENKPHDRKEWSARVAHFRDPDHNLIEIYKML.

In terms of domain architecture, VOC spans 2 to 127; that stretch reads KLLQIRLLVN…DHNLIEIYKM (126 aa). Residues Glu48 and Glu123 each contribute to the Ni(2+) site.

The protein belongs to the glyoxalase I family.

This is an uncharacterized protein from Bacillus subtilis (strain 168).